The sequence spans 417 residues: MGKFKINGGKRLYGEVEVHGAKNSILPILAATILNEGVSVIHNCPRLKDVDSMIEILEHIGCKVSFSGRDIVVDARDVKDSEIPDNLMRTMRSSIFLMGALIARNKKAFISFPGGCDIGHRPIDLHLKGLKKLGVEIEESYGYIRCKGVRVRGNEIHLDLPSVGATENIMLAATLADGITVIRNAAKEPEIEDLQNFLNSMGARITGAGTNTIVIEGVKKLHDTEYTIIPDRIVAGTYLCAAAMTRGELTVVKALKEHLEPLISKLKETGCELKTGNDYIKITCNKRPKAVDMIVTLPYPGFPTDLQPQIVSVLSIAEGTSIVTETIFDNRFKYTEELVRMGADIKVEGRVAVIRGVDKITGAKVLAKDLRGGVALVIAGLGAEGTTVVEGAEHIDRGYESLEKALKSVGADIVRIM.

22–23 is a binding site for phosphoenolpyruvate; it reads KN. Residue arginine 92 participates in UDP-N-acetyl-alpha-D-glucosamine binding. Cysteine 116 acts as the Proton donor in catalysis. Cysteine 116 carries the 2-(S-cysteinyl)pyruvic acid O-phosphothioketal modification. Residues 121–125, aspartate 305, and isoleucine 327 each bind UDP-N-acetyl-alpha-D-glucosamine; that span reads RPIDL.

It belongs to the EPSP synthase family. MurA subfamily.

The protein resides in the cytoplasm. It catalyses the reaction phosphoenolpyruvate + UDP-N-acetyl-alpha-D-glucosamine = UDP-N-acetyl-3-O-(1-carboxyvinyl)-alpha-D-glucosamine + phosphate. It participates in cell wall biogenesis; peptidoglycan biosynthesis. Cell wall formation. Adds enolpyruvyl to UDP-N-acetylglucosamine. The polypeptide is UDP-N-acetylglucosamine 1-carboxyvinyltransferase 2 (Caldanaerobacter subterraneus subsp. tengcongensis (strain DSM 15242 / JCM 11007 / NBRC 100824 / MB4) (Thermoanaerobacter tengcongensis)).